The primary structure comprises 61 residues: Small ribosomal subunit protein uS14 (61 aa).

4 residues coordinate Zn(2+): Cys-24, Cys-27, Cys-40, and Cys-43.

This sequence belongs to the universal ribosomal protein uS14 family. Zinc-binding uS14 subfamily. Part of the 30S ribosomal subunit. Contacts proteins S3 and S10. The cofactor is Zn(2+).

Its function is as follows. Binds 16S rRNA, required for the assembly of 30S particles and may also be responsible for determining the conformation of the 16S rRNA at the A site. The protein is Small ribosomal subunit protein uS14 of Halothermothrix orenii (strain H 168 / OCM 544 / DSM 9562).